The chain runs to 285 residues: MNERENIIALIFDFDNTLIYGNMQQVLFDEYCVDSCSFWREVEGLEYVYKQNGYNIISNEMIYLSHFLTYVREGFFESLDNRALFNLGAKLRFFEGVIGLFDEISEINKKLENSKSQIKIYIVSSGFRQMILGSKIAPYVSKVWACEFIDSYLMPFYELRDDKFSKNKILSSVCYFVDHTIKTRVIFEINKGSYEKINERVPKSKRQIPFKNIFYIADGFSDVPAFEILNNILKHCRNTLTVYHGNDKNAKKLFYENRVGDFAEANYTKGTKLYNWIMEKICLSV.

This is an uncharacterized protein from Borreliella burgdorferi (strain ATCC 35210 / DSM 4680 / CIP 102532 / B31) (Borrelia burgdorferi).